Here is a 1346-residue protein sequence, read N- to C-terminus: Adhesion G protein-coupled receptor A3 (1346 aa).

Residues 1–21 (MSVLCVLLLAFVLPLRGSSSA) form the signal peptide. The interval 18–45 (SSSAGSTECKTYDERSRSAGKSSPSGAT) is disordered. The Extracellular portion of the chain corresponds to 22–739 (GSTECKTYDE…NVFIFRPLHP (718 aa)). 4 LRR repeats span residues 66-90 (FPNR…SFVG), 91-114 (LSSL…AFYG), 116-138 (FSLK…VFKG), and 139-162 (LTNL…IFDS). Positions 176–223 (LLCDCNLQWLVVWIKEKAIGVKETRCSFPRSLQGQLITTLRAETLTCD) constitute an LRRCT domain. The Ig-like domain occupies 229 to 327 (PSFQMTPSQH…GNNTRTVHIV (99 aa)). Cys-251 and Cys-311 are joined by a disulfide. 3 LRR repeats span residues 503–529 (LQRI…ALEA), 574–600 (TSNL…LFSS), and 611–632 (VYKL…GNSS). A GAIN-B domain is found at 563-728 (PERQLSFKCN…AVLMDLNRTG (166 aa)). The GPS stretch occupies residues 679 to 728 (PAFWNFSLQGGQGGWQSDGCRILHQDDNFTTVSCHSLNSYAVLMDLNRTG). An intrachain disulfide couples Cys-698 to Cys-712. Residues 740 to 760 (VIYSTALVLVLCLLSVIVSYI) form a helical membrane-spanning segment. Over 761–773 (YHHKSVRISKKCW) the chain is Cytoplasmic. Residues 774-794 (HMLVNLCLHILLTCAVFVGGI) form a helical membrane-spanning segment. At 795 to 804 (NQTYNASVCQ) the chain is on the extracellular side. A helical membrane pass occupies residues 805–825 (AMGIVLHYSTLATALWSGVTA). At 826-854 (RNIYKQVTRKAKRYEELDEPPPPPRPMLR) the chain is on the cytoplasmic side. The chain crosses the membrane as a helical span at residues 855–875 (FYLIGGGIPIIVCGITAAANI). Residues 876 to 897 (KNYGSQVNAPYCWMAWEPSLGA) lie on the Extracellular side of the membrane. The helical transmembrane segment at 898-918 (FYGPAAFIVFVDCMYFLSILI) threads the bilayer. Residues 919–977 (QLRRHPERRFELKEQSEEQQHLSVTEATEITPVHLESSPTAQPVPMSALENEHTFVSQL) lie on the Cytoplasmic side of the membrane. A helical membrane pass occupies residues 978–998 (MGVAGSLTLYAALWVFGALAI). The Extracellular portion of the chain corresponds to 999–1005 (SQEHPAD). A helical membrane pass occupies residues 1006–1026 (LVFACLFGALALGLGAFLVAH). Residues 1027–1346 (HCVNRQDMRR…TGLWKHETTV (320 aa)) are Cytoplasmic-facing. Residues 1157–1169 (SVNNNNLPGNANI) are compositionally biased toward polar residues. 2 disordered regions span residues 1157–1188 (SVNN…RASR) and 1202–1284 (SVEG…DGSE). Basic residues-rich tracts occupy residues 1173–1187 (PGRH…HRAS) and 1212–1226 (NKRH…RNSR). Residues 1238-1252 (QSQLQQDSSDAASTS) show a composition bias toward low complexity. Gly residues predominate over residues 1266-1280 (IGNGFGHGISNGGLL). Positions 1344–1346 (TTV) match the PDZ-binding motif.

Belongs to the G-protein coupled receptor 2 family. Adhesion G-protein coupled receptor (ADGR) subfamily. As to quaternary structure, interacts (via PDZ-binding motif) with disheveled proteins; leading to the localization of dishevelled proteins to specific membrane subdomains. As to expression, ubiquitously expressed at very low levels.

Its subcellular location is the cell membrane. Orphan receptor that acts as a critical modulator of planar cell polarity during gastrulation. Controls the localization of dishevelled. The chain is Adhesion G protein-coupled receptor A3 (adgra3) from Danio rerio (Zebrafish).